A 188-amino-acid chain; its full sequence is Ion-translocating oxidoreductase complex subunit B (188 aa).

The tract at residues 1-23 (MIEAAVSMSALGLGLGLLLGVAA) is hydrophobic. The region spanning 29-88 (ESPPIVDAIEGILPGTNCGACGYPGCRGLAEAMSEGAAPVTACAPGGRDVALALAAIVET) is the 4Fe-4S domain. Residues Cys-46, Cys-49, Cys-54, Cys-71, Cys-113, Cys-116, Cys-119, Cys-123, Cys-143, Cys-146, Cys-149, and Cys-153 each coordinate [4Fe-4S] cluster. 4Fe-4S ferredoxin-type domains follow at residues 104-133 (TVAF…GANR) and 134-163 (QIHT…ARVK).

It belongs to the 4Fe4S bacterial-type ferredoxin family. RnfB subfamily. The complex is composed of six subunits: RnfA, RnfB, RnfC, RnfD, RnfE and RnfG. Requires [4Fe-4S] cluster as cofactor.

The protein localises to the cellular chromatophore membrane. Functionally, part of a membrane-bound complex that couples electron transfer with translocation of ions across the membrane. This Cereibacter sphaeroides (strain ATCC 17023 / DSM 158 / JCM 6121 / CCUG 31486 / LMG 2827 / NBRC 12203 / NCIMB 8253 / ATH 2.4.1.) (Rhodobacter sphaeroides) protein is Ion-translocating oxidoreductase complex subunit B.